Reading from the N-terminus, the 132-residue chain is Small ribosomal subunit protein uS8 (132 aa).

It belongs to the universal ribosomal protein uS8 family. As to quaternary structure, part of the 30S ribosomal subunit. Contacts proteins S5 and S12.

One of the primary rRNA binding proteins, it binds directly to 16S rRNA central domain where it helps coordinate assembly of the platform of the 30S subunit. This chain is Small ribosomal subunit protein uS8, found in Lactobacillus delbrueckii subsp. bulgaricus (strain ATCC BAA-365 / Lb-18).